Reading from the N-terminus, the 446-residue chain is Glucose-6-phosphate isomerase (446 aa).

Glu-288 (proton donor) is an active-site residue. Catalysis depends on residues His-309 and Lys-423.

It belongs to the GPI family.

The protein localises to the cytoplasm. The enzyme catalyses alpha-D-glucose 6-phosphate = beta-D-fructose 6-phosphate. It participates in carbohydrate biosynthesis; gluconeogenesis. Its pathway is carbohydrate degradation; glycolysis; D-glyceraldehyde 3-phosphate and glycerone phosphate from D-glucose: step 2/4. In terms of biological role, catalyzes the reversible isomerization of glucose-6-phosphate to fructose-6-phosphate. The chain is Glucose-6-phosphate isomerase from Lacticaseibacillus casei (strain BL23) (Lactobacillus casei).